Reading from the N-terminus, the 499-residue chain is Aspartyl/glutamyl-tRNA(Asn/Gln) amidotransferase subunit B (499 aa).

This sequence belongs to the GatB/GatE family. GatB subfamily. In terms of assembly, heterotrimer of A, B and C subunits.

The enzyme catalyses L-glutamyl-tRNA(Gln) + L-glutamine + ATP + H2O = L-glutaminyl-tRNA(Gln) + L-glutamate + ADP + phosphate + H(+). The catalysed reaction is L-aspartyl-tRNA(Asn) + L-glutamine + ATP + H2O = L-asparaginyl-tRNA(Asn) + L-glutamate + ADP + phosphate + 2 H(+). Functionally, allows the formation of correctly charged Asn-tRNA(Asn) or Gln-tRNA(Gln) through the transamidation of misacylated Asp-tRNA(Asn) or Glu-tRNA(Gln) in organisms which lack either or both of asparaginyl-tRNA or glutaminyl-tRNA synthetases. The reaction takes place in the presence of glutamine and ATP through an activated phospho-Asp-tRNA(Asn) or phospho-Glu-tRNA(Gln). This Salinispora tropica (strain ATCC BAA-916 / DSM 44818 / JCM 13857 / NBRC 105044 / CNB-440) protein is Aspartyl/glutamyl-tRNA(Asn/Gln) amidotransferase subunit B.